We begin with the raw amino-acid sequence, 267 residues long: GTP cyclohydrolase FolE2 (267 aa).

Belongs to the GTP cyclohydrolase IV family.

The enzyme catalyses GTP + H2O = 7,8-dihydroneopterin 3'-triphosphate + formate + H(+). The protein operates within cofactor biosynthesis; 7,8-dihydroneopterin triphosphate biosynthesis; 7,8-dihydroneopterin triphosphate from GTP: step 1/1. In terms of biological role, converts GTP to 7,8-dihydroneopterin triphosphate. In Citrifermentans bemidjiense (strain ATCC BAA-1014 / DSM 16622 / JCM 12645 / Bem) (Geobacter bemidjiensis), this protein is GTP cyclohydrolase FolE2.